The following is a 354-amino-acid chain: MSGEKTEQPTPKKIRDARKKGQVAKSKEVVSTALIVALSAMLMGLSDYYFEHFSKLMLIPAEQSYLPFSQALSYVVDNVLLEFFYLCFPLLTVAALMAIASHVVQYGFLISGEAIKPDIKKINPIEGAKRIFSIKSLVEFLKSILKVVLLSILIWIIIKGNLVTLLQLPTCGIECITPLLGQILRQLMVICTVGFVVISIADYAFEYYQYIKELKMSKDEIKREYKEMEGSPEIKSKRRQFHQEIQSRNMRENVKRSSVVVANPTHIAIGILYKRGETPLPLVTFKYTDAQVQTVRKIAEEEGVPILQRIPLARALYWDALVDHYIPAEQIEATAEVLRWLERQNIEKQHSEML.

A disordered region spans residues 1-20 (MSGEKTEQPTPKKIRDARKK). The next 5 helical transmembrane spans lie at 30-50 (VSTALIVALSAMLMGLSDYYF), 79-99 (VLLEFFYLCFPLLTVAALMAI), 138-158 (VEFLKSILKVVLLSILIWIII), 163-183 (VTLLQLPTCGIECITPLLGQI), and 187-207 (LMVICTVGFVVISIADYAFEY).

Belongs to the type III secretion exporter family.

The protein localises to the cell membrane. In terms of biological role, component of the yop secretion machinery. This Yersinia pestis protein is Yop proteins translocation protein U (yscU).